The following is a 452-amino-acid chain: Mitochondrial distribution and morphology protein 34 (452 aa).

Residues 1 to 196 enclose the SMP-LTD domain; that stretch reads MSFRVKGWSD…LPSIIYKMSR (196 aa).

Belongs to the MDM34 family. As to quaternary structure, component of the ER-mitochondria encounter structure (ERMES) or MDM complex, composed of mmm1, mdm10, mdm12 and mdm34.

Its subcellular location is the mitochondrion outer membrane. Its function is as follows. Component of the ERMES/MDM complex, which serves as a molecular tether to connect the endoplasmic reticulum (ER) and mitochondria. Components of this complex are involved in the control of mitochondrial shape and protein biogenesis, and function in nonvesicular lipid trafficking between the ER and mitochondria. Mdm34 is required for the interaction of the ER-resident membrane protein mmm1 and the outer mitochondrial membrane-resident beta-barrel protein mdm10. This Schizosaccharomyces pombe (strain 972 / ATCC 24843) (Fission yeast) protein is Mitochondrial distribution and morphology protein 34.